Consider the following 421-residue polypeptide: UDP-N-acetylglucosamine 1-carboxyvinyltransferase (421 aa).

24-25 (KN) contacts phosphoenolpyruvate. R93 is a UDP-N-acetyl-alpha-D-glucosamine binding site. The active-site Proton donor is the C117. A 2-(S-cysteinyl)pyruvic acid O-phosphothioketal modification is found at C117. UDP-N-acetyl-alpha-D-glucosamine contacts are provided by D307 and I329.

Belongs to the EPSP synthase family. MurA subfamily.

It is found in the cytoplasm. The catalysed reaction is phosphoenolpyruvate + UDP-N-acetyl-alpha-D-glucosamine = UDP-N-acetyl-3-O-(1-carboxyvinyl)-alpha-D-glucosamine + phosphate. It functions in the pathway cell wall biogenesis; peptidoglycan biosynthesis. Functionally, cell wall formation. Adds enolpyruvyl to UDP-N-acetylglucosamine. In Blochmanniella pennsylvanica (strain BPEN), this protein is UDP-N-acetylglucosamine 1-carboxyvinyltransferase.